The chain runs to 330 residues: MLSLSSYVLNLVGSILCLIGCLFIIGHFFWIPLLRTSLSRIIIYPTFILLLYDMVSFPSFISKTADLYIERSTIICNFQEAIIQYLILSNFIWSVCISVNLLYLCFSPNKNLKKNELLYHLCSWGIPLIVVVITKIPNMISDNGNQCRFKSPNYIKFYLETILFIAFMLFNFIVAFITIKHIISGNLRESETTTTSVLFVNEKKITTKKIVWRLLLYPSILSICYIMTLVLSIYQFSTESYGSGGAYANSINNKRNDKNTESGNSNNNNNSYIEILLYISKAIFLLQGFFNALVYLRSSKLRDRYKKITIFRKIFWRDEADYQSINDGFN.

Topologically, residues 1-10 (MLSLSSYVLN) are extracellular. The helical transmembrane segment at 11 to 31 (LVGSILCLIGCLFIIGHFFWI) threads the bilayer. At 32–40 (PLLRTSLSR) the chain is on the cytoplasmic side. A helical membrane pass occupies residues 41 to 61 (IIIYPTFILLLYDMVSFPSFI). Residues 62–85 (SKTADLYIERSTIICNFQEAIIQY) are Extracellular-facing. Residues 86 to 106 (LILSNFIWSVCISVNLLYLCF) traverse the membrane as a helical segment. Residues 107–116 (SPNKNLKKNE) are Cytoplasmic-facing. The chain crosses the membrane as a helical span at residues 117-137 (LLYHLCSWGIPLIVVVITKIP). Over 138–156 (NMISDNGNQCRFKSPNYIK) the chain is Extracellular. Residues 157-177 (FYLETILFIAFMLFNFIVAFI) traverse the membrane as a helical segment. Topologically, residues 178-213 (TIKHIISGNLRESETTTTSVLFVNEKKITTKKIVWR) are cytoplasmic. A helical transmembrane segment spans residues 214–234 (LLLYPSILSICYIMTLVLSIY). Over 235–274 (QFSTESYGSGGAYANSINNKRNDKNTESGNSNNNNNSYIE) the chain is Extracellular. N269 carries N-linked (GlcNAc...) asparagine glycosylation. A helical transmembrane segment spans residues 275-295 (ILLYISKAIFLLQGFFNALVY). The Cytoplasmic portion of the chain corresponds to 296–330 (LRSSKLRDRYKKITIFRKIFWRDEADYQSINDGFN).

Belongs to the G-protein coupled receptor 5 family.

Its subcellular location is the membrane. Functionally, receptor for cAMP. The chain is Cyclic AMP receptor-like protein E (crlE) from Dictyostelium discoideum (Social amoeba).